Consider the following 833-residue polypeptide: MTFYDHTAIEPKWQAFWADNHTFKTGTDASKPKFYALDMFPYPSGAGLHVGHPEGYTATDILSRFKRAQGHNVLHPMGWDAFGLPAEQYAMDTGNDPAEFTAENIANFKRQINALGFSYDWDREVNTTDPNYYKWTQWIFTKLYEKGLAYEAEVPVNWVEELGTAIANEEVLPDGTSERGGYPVVRKPMRQWMLKITAYAERLLEDLEEVDWPESIKDMQRNWIGKSTGANVTFKVKDTDKDFTVFTTRPDTLFGATYAVLAPEHALVDAITTADQAEAVADYKRQASLKSDLARTDLAKEKTGVWTGSYAINPVNGNEMPVWIADYVLASYGTGAIMAVPAHDERDWEFAKQFNLDIIPVLEGGNVEEAAFTEDGLHINSGFLDGLDKASAIAKMVEWLEAEGVGNEKVTYRLRDWLFSRQRYWGEPIPIIHWEDGTSTAVPESELPLVLPVTKDIRPSGTGESPLANVTDWLEVTREDGVKGRRETNTMPQWAGSSWYYLRYIDPHNTEKLADEELLKQWLPVDIYVGGAEHAVLHLLYARFWHKVLYDLGVVPTKEPFQKLFNQGMILGTSYRDSRGALVATDKVEKRDGSFFHLETGEELEQAPAKMSKSLKNVVNPDDVVEQYGADTLRVYEMFMGPLDASIAWSEEGLEGSRKFLDRVYRLITTKEITEENSGALDKVYNETVKAVTEQVDQMKFNTAIAQLMVFVNAANKEDKLFSDYAKGFVQLIAPFAPHLGEELWQALTASGESISYVPWPSYDESKLVENDVEIVVQIKGKVKAKLVVAKDLSREELQEVALANEKVQAEIAGKDIIKVIAVPNKLVNIVIK.

The 'HIGH' region signature appears at 41-52 (PYPSGAGLHVGH). The short motif at 610–614 (KMSKS) is the 'KMSKS' region element. An ATP-binding site is contributed by lysine 613.

The protein belongs to the class-I aminoacyl-tRNA synthetase family.

The protein localises to the cytoplasm. It catalyses the reaction tRNA(Leu) + L-leucine + ATP = L-leucyl-tRNA(Leu) + AMP + diphosphate. This is Leucine--tRNA ligase from Streptococcus pyogenes serotype M5 (strain Manfredo).